A 253-amino-acid polypeptide reads, in one-letter code: Giant extracellular hemoglobin linker 1 chain (253 aa).

The LDL-receptor class A domain occupies 89–131 (HHCDDDHLSCKDVAFTCIGHNLVCDGHKDCLNGHDEDEETCSI). Disulfide bonds link Cys-91/Cys-105, Cys-98/Cys-118, and Cys-112/Cys-129.

As to quaternary structure, disulfide-linked dimer of identical chains. A model is proposed for the subunit structure of the Tylorrhynchus hemoglobin, consisting of 216 polypeptide chains, 192 heme-containing chains, and 24 linker chains.

In terms of biological role, acts as a linker for the assembly of heme-containing chains in the construction of giant hemoglobin. This is Giant extracellular hemoglobin linker 1 chain from Tylorrhynchus heterochetus (Japanese palolo worm).